A 138-amino-acid chain; its full sequence is Large ribosomal subunit protein bL19 (138 aa).

The protein belongs to the bacterial ribosomal protein bL19 family.

This protein is located at the 30S-50S ribosomal subunit interface and may play a role in the structure and function of the aminoacyl-tRNA binding site. The chain is Large ribosomal subunit protein bL19 from Rickettsia conorii (strain ATCC VR-613 / Malish 7).